The primary structure comprises 312 residues: Pantothenate synthetase (312 aa).

42–49 (MGALHTGH) contacts ATP. Catalysis depends on histidine 49, which acts as the Proton donor. Glutamine 73 lines the (R)-pantoate pocket. Glutamine 73 provides a ligand contact to beta-alanine. Residue 159 to 162 (GEKD) coordinates ATP. Glutamine 165 contacts (R)-pantoate. ATP-binding positions include valine 188 and 196-199 (LSSR).

Belongs to the pantothenate synthetase family. Homodimer.

It localises to the cytoplasm. The catalysed reaction is (R)-pantoate + beta-alanine + ATP = (R)-pantothenate + AMP + diphosphate + H(+). It participates in cofactor biosynthesis; (R)-pantothenate biosynthesis; (R)-pantothenate from (R)-pantoate and beta-alanine: step 1/1. Catalyzes the condensation of pantoate with beta-alanine in an ATP-dependent reaction via a pantoyl-adenylate intermediate. The protein is Pantothenate synthetase of Rhodococcus jostii (strain RHA1).